Reading from the N-terminus, the 59-residue chain is Large ribosomal subunit protein bL32c (59 aa).

The interval 37 to 59 is disordered; it reads SRSFSSGNEHPKPKGFSGQQANK.

Belongs to the bacterial ribosomal protein bL32 family.

It is found in the plastid. Its subcellular location is the chloroplast. The polypeptide is Large ribosomal subunit protein bL32c (Saccharum hybrid (Sugarcane)).